Consider the following 629-residue polypeptide: Chaperone protein HtpG (629 aa).

Residues 1 to 335 (MSEVETSVEK…TADLPLNVSR (335 aa)) form an a; substrate-binding region. A b region spans residues 336 to 551 (EMIQESPLLA…EQGPDRQLQK (216 aa)). Residues 552–629 (MLQDAGRIEG…SRVFGRALKE (78 aa)) form a c region.

This sequence belongs to the heat shock protein 90 family. In terms of assembly, homodimer.

It localises to the cytoplasm. In terms of biological role, molecular chaperone. Has ATPase activity. The protein is Chaperone protein HtpG of Rhizobium meliloti (strain 1021) (Ensifer meliloti).